Consider the following 611-residue polypeptide: 4-hydroxy-3-methylbut-2-en-1-yl diphosphate synthase (flavodoxin) (611 aa).

[4Fe-4S] cluster contacts are provided by Cys-520, Cys-523, Cys-554, and Glu-561.

It belongs to the IspG family. It depends on [4Fe-4S] cluster as a cofactor.

It catalyses the reaction (2E)-4-hydroxy-3-methylbut-2-enyl diphosphate + oxidized [flavodoxin] + H2O + 2 H(+) = 2-C-methyl-D-erythritol 2,4-cyclic diphosphate + reduced [flavodoxin]. Its pathway is isoprenoid biosynthesis; isopentenyl diphosphate biosynthesis via DXP pathway; isopentenyl diphosphate from 1-deoxy-D-xylulose 5-phosphate: step 5/6. Functionally, converts 2C-methyl-D-erythritol 2,4-cyclodiphosphate (ME-2,4cPP) into 1-hydroxy-2-methyl-2-(E)-butenyl 4-diphosphate. This chain is 4-hydroxy-3-methylbut-2-en-1-yl diphosphate synthase (flavodoxin), found in Parabacteroides distasonis (strain ATCC 8503 / DSM 20701 / CIP 104284 / JCM 5825 / NCTC 11152).